The sequence spans 233 residues: MGQTRRLRRLGRHRCRGQRVRWRTATSADHPRRGRPAAQAVRRRRPVSLDGRYGIQAVRRRAVSIFPCPLSRVIERLKQALYPKLLPIARNWWAKLGREAPWPDSLDDWLASCHAAGQTRSTALMLKYGTNDWNALHQDLYGELVFPLQVVINLSDPETDYTGGEFLLVEQRPRAQSRGTAMQLPQGHGYVFTTRDRPVRTSRGWSASPVRHGLSTIRSGERYAMGLIFHDAA.

Positions 21–43 are disordered; the sequence is RWRTATSADHPRRGRPAAQAVRR.

This is an uncharacterized protein from Mycobacterium tuberculosis (strain CDC 1551 / Oshkosh).